A 140-amino-acid chain; its full sequence is uncharacterized protein (140 aa).

This is an uncharacterized protein from Fowlpox virus (strain NVSL) (FPV).